Reading from the N-terminus, the 470-residue chain is Argininosuccinate lyase (470 aa).

This sequence belongs to the lyase 1 family. Argininosuccinate lyase subfamily.

The protein resides in the cytoplasm. The catalysed reaction is 2-(N(omega)-L-arginino)succinate = fumarate + L-arginine. It functions in the pathway amino-acid biosynthesis; L-arginine biosynthesis; L-arginine from L-ornithine and carbamoyl phosphate: step 3/3. In Leptospira borgpetersenii serovar Hardjo-bovis (strain L550), this protein is Argininosuccinate lyase.